The primary structure comprises 481 residues: Argininosuccinate lyase (481 aa).

It belongs to the lyase 1 family. Argininosuccinate lyase subfamily.

The protein localises to the cytoplasm. The catalysed reaction is 2-(N(omega)-L-arginino)succinate = fumarate + L-arginine. The protein operates within amino-acid biosynthesis; L-arginine biosynthesis; L-arginine from L-ornithine and carbamoyl phosphate: step 3/3. The sequence is that of Argininosuccinate lyase from Kineococcus radiotolerans (strain ATCC BAA-149 / DSM 14245 / SRS30216).